The primary structure comprises 638 residues: Phosphomethylpyrimidine synthase (638 aa).

Substrate is bound by residues asparagine 243, methionine 272, tyrosine 301, histidine 337, 357–359 (SRG), 398–401 (DGLR), and glutamate 437. Histidine 441 serves as a coordination point for Zn(2+). Tyrosine 464 lines the substrate pocket. Zn(2+) is bound at residue histidine 505. [4Fe-4S] cluster is bound by residues cysteine 585, cysteine 588, and cysteine 593.

The protein belongs to the ThiC family. In terms of assembly, homodimer. It depends on [4Fe-4S] cluster as a cofactor.

It catalyses the reaction 5-amino-1-(5-phospho-beta-D-ribosyl)imidazole + S-adenosyl-L-methionine = 4-amino-2-methyl-5-(phosphooxymethyl)pyrimidine + CO + 5'-deoxyadenosine + formate + L-methionine + 3 H(+). The protein operates within cofactor biosynthesis; thiamine diphosphate biosynthesis. Its function is as follows. Catalyzes the synthesis of the hydroxymethylpyrimidine phosphate (HMP-P) moiety of thiamine from aminoimidazole ribotide (AIR) in a radical S-adenosyl-L-methionine (SAM)-dependent reaction. This is Phosphomethylpyrimidine synthase from Dechloromonas aromatica (strain RCB).